We begin with the raw amino-acid sequence, 444 residues long: MARTRNRFDRTPFQTAITDLSHDGRGVARRDGEGGKVTFISGALPGELVRAEPTARSRHFDEAKTVEVLEASPQRVAPRCPHFGVCAGCVLQHLEESQQIVAKQRVLMDNLERIGHVTPQAVLPALSGDNWGYRRKGRFSVRRVEKKAKTLVGFRELDPRFVADLSVCYTVIPQIGENIPLLAALVEGMDGKRDIPQIEFIAGDDAVALTIRHMQPLSARDQQAWIAFAQEHGFAIFLQPGGVDSVHPLWPQEVPLSFRLPQWDVDLAFRPLDFIQVNASLNQKMIVHALALLDAKPDDRVLDLFCGLGNFTLPLARVVREVVGVEGDAGLVARAKDNAQRNGLDNAQFYAADLTQDQRNAAWMRQGFDKLLLDPPRSGALEVLQQLPLKTFERIVYVSCHPGSLARDAGYLVNEQGFTLVSAGAMDMFPHTAHVESIAVFERR.

Residues 5–67 (RNRFDRTPFQ…RHFDEAKTVE (63 aa)) form the TRAM domain. Residues C80, C86, C89, and C168 each coordinate [4Fe-4S] cluster. S-adenosyl-L-methionine contacts are provided by Q276, F305, N310, E326, D353, and D374. The Nucleophile role is filled by C400.

This sequence belongs to the class I-like SAM-binding methyltransferase superfamily. RNA M5U methyltransferase family. RlmD subfamily.

It carries out the reaction uridine(1939) in 23S rRNA + S-adenosyl-L-methionine = 5-methyluridine(1939) in 23S rRNA + S-adenosyl-L-homocysteine + H(+). Its function is as follows. Catalyzes the formation of 5-methyl-uridine at position 1939 (m5U1939) in 23S rRNA. The polypeptide is 23S rRNA (uracil(1939)-C(5))-methyltransferase RlmD (Xanthomonas oryzae pv. oryzae (strain KACC10331 / KXO85)).